Reading from the N-terminus, the 490-residue chain is Colicin-5 (490 aa).

Residues 1 to 20 (MDKVTDNSPDVESTESTEGS) show a composition bias toward polar residues. 2 disordered regions span residues 1 to 29 (MDKVTDNSPDVESTESTEGSFPTVGVDTG) and 146 to 171 (QKAREEAEAAEKALREAERQRDEIAR). Residues 146–170 (QKAREEAEAAEKALREAERQRDEIA) show a composition bias toward basic and acidic residues. A helical transmembrane segment spans residues 447-467 (IVALMFSFIVGVPLGFWGIAI).

Belongs to the channel forming colicin family.

The protein localises to the host membrane. In terms of biological role, this colicin is a channel-forming colicin. This class of transmembrane toxins depolarize the cytoplasmic membrane, leading to dissipation of cellular energy. Its function is as follows. Colicins are polypeptide toxins produced by and active against E.coli and closely related bacteria. The protein is Colicin-5 (cfa) of Escherichia coli.